Consider the following 352-residue polypeptide: DNA polymerase IV (352 aa).

Residues 4–185 (IIHVDMDCFF…LPLSKIPGVG (182 aa)) form the UmuC domain. Positions 8 and 103 each coordinate Mg(2+). Glu-104 is a catalytic residue.

Belongs to the DNA polymerase type-Y family. In terms of assembly, monomer. Requires Mg(2+) as cofactor.

It is found in the cytoplasm. The enzyme catalyses DNA(n) + a 2'-deoxyribonucleoside 5'-triphosphate = DNA(n+1) + diphosphate. Its function is as follows. Poorly processive, error-prone DNA polymerase involved in untargeted mutagenesis. Copies undamaged DNA at stalled replication forks, which arise in vivo from mismatched or misaligned primer ends. These misaligned primers can be extended by PolIV. Exhibits no 3'-5' exonuclease (proofreading) activity. May be involved in translesional synthesis, in conjunction with the beta clamp from PolIII. The polypeptide is DNA polymerase IV (Yersinia enterocolitica serotype O:8 / biotype 1B (strain NCTC 13174 / 8081)).